Reading from the N-terminus, the 361-residue chain is Teichoic acids export ATP-binding protein TagH (361 aa).

The ABC transporter domain maps to 13 to 246 (TKEYDLYKSQ…YREFTKWFKG (234 aa)). ATP is bound at residue 60–67 (GVNGSGKS). The segment at 247–361 (QSKKEKKHFQ…HDTNATSGVK (115 aa)) is unknown.

The protein belongs to the ABC transporter superfamily. Teichoic acids exporter (TC 3.A.1.104.1) family. As to quaternary structure, the complex is composed of two ATP-binding proteins (TagH) and two transmembrane proteins (TagG).

The protein localises to the cell membrane. It carries out the reaction ATP + H2O + teichoic acidSide 1 = ADP + phosphate + teichoic acidSide 2.. Its function is as follows. Part of the ABC transporter complex TagGH involved in teichoic acids export. Responsible for energy coupling to the transport system. This Levilactobacillus brevis (strain ATCC 367 / BCRC 12310 / CIP 105137 / JCM 1170 / LMG 11437 / NCIMB 947 / NCTC 947) (Lactobacillus brevis) protein is Teichoic acids export ATP-binding protein TagH.